We begin with the raw amino-acid sequence, 113 residues long: MANTKKSAINQVVTRDYTIHMHKRLYGVSFKKRAPRAIKEIVAFAQKHMQTKEVRVDPSLNKEVWKRGIRNVPHRLRLRLSRKRSDEDDKALYTYVQAVDVANPKMETTVVEE.

It belongs to the eukaryotic ribosomal protein eL31 family. In terms of assembly, component of the large ribosomal subunit (LSU). Mature yeast ribosomes consist of a small (40S) and a large (60S) subunit. The 40S small subunit contains 1 molecule of ribosomal RNA (18S rRNA) and at least 33 different proteins. The large 60S subunit contains 3 rRNA molecules (25S, 5.8S and 5S rRNA) and at least 46 different proteins.

It localises to the cytoplasm. Its function is as follows. Component of the ribosome, a large ribonucleoprotein complex responsible for the synthesis of proteins in the cell. The small ribosomal subunit (SSU) binds messenger RNAs (mRNAs) and translates the encoded message by selecting cognate aminoacyl-transfer RNA (tRNA) molecules. The large subunit (LSU) contains the ribosomal catalytic site termed the peptidyl transferase center (PTC), which catalyzes the formation of peptide bonds, thereby polymerizing the amino acids delivered by tRNAs into a polypeptide chain. The nascent polypeptides leave the ribosome through a tunnel in the LSU and interact with protein factors that function in enzymatic processing, targeting, and the membrane insertion of nascent chains at the exit of the ribosomal tunnel. This chain is Large ribosomal subunit protein eL31 (rpl31), found in Schizosaccharomyces pombe (strain 972 / ATCC 24843) (Fission yeast).